Consider the following 123-residue polypeptide: uncharacterized protein (123 aa).

Residues 36-76 are a coiled coil; sequence VDRQENKKEFLSAEEAREKFKELINQVRSWKEQMSTLSKYA.

This is an uncharacterized protein from Aquifex aeolicus (strain VF5).